We begin with the raw amino-acid sequence, 114 residues long: Large ribosomal subunit protein bL20c (114 aa).

It belongs to the bacterial ribosomal protein bL20 family.

The protein localises to the plastid. It is found in the chloroplast. Functionally, binds directly to 23S ribosomal RNA and is necessary for the in vitro assembly process of the 50S ribosomal subunit. It is not involved in the protein synthesizing functions of that subunit. The polypeptide is Large ribosomal subunit protein bL20c (Psilotum nudum (Whisk fern)).